The primary structure comprises 188 residues: dCTP deaminase (188 aa).

DCTP-binding positions include 111 to 116 (KSTYAR), 135 to 137 (TLE), glutamine 156, tyrosine 170, lysine 179, and glutamine 180. Catalysis depends on glutamate 137, which acts as the Proton donor/acceptor.

The protein belongs to the dCTP deaminase family. As to quaternary structure, homotrimer.

It carries out the reaction dCTP + H2O + H(+) = dUTP + NH4(+). It functions in the pathway pyrimidine metabolism; dUMP biosynthesis; dUMP from dCTP (dUTP route): step 1/2. In terms of biological role, catalyzes the deamination of dCTP to dUTP. The polypeptide is dCTP deaminase (Rickettsia africae (strain ESF-5)).